A 363-amino-acid polypeptide reads, in one-letter code: 3-dehydroquinate synthase (363 aa).

NAD(+) is bound by residues 72-77, 106-110, 130-131, Lys-142, and Lys-151; these read SGEQSK, GVIGD, and TT. Residues Glu-184, His-246, and His-263 each coordinate Zn(2+).

The protein belongs to the sugar phosphate cyclases superfamily. Dehydroquinate synthase family. The cofactor is Co(2+). Zn(2+) is required as a cofactor. It depends on NAD(+) as a cofactor.

It localises to the cytoplasm. The enzyme catalyses 7-phospho-2-dehydro-3-deoxy-D-arabino-heptonate = 3-dehydroquinate + phosphate. Its pathway is metabolic intermediate biosynthesis; chorismate biosynthesis; chorismate from D-erythrose 4-phosphate and phosphoenolpyruvate: step 2/7. In terms of biological role, catalyzes the conversion of 3-deoxy-D-arabino-heptulosonate 7-phosphate (DAHP) to dehydroquinate (DHQ). The protein is 3-dehydroquinate synthase of Bacillus pumilus (strain SAFR-032).